A 468-amino-acid polypeptide reads, in one-letter code: Ubiquinone biosynthesis monooxygenase COQ6, mitochondrial (468 aa).

The transit peptide at 1-28 (MAARLVSRCGAVRAAPHSGPLVSWRRWS) directs the protein to the mitochondrion.

It belongs to the UbiH/COQ6 family. In terms of assembly, component of a multi-subunit COQ enzyme complex, composed of at least COQ3, COQ4, COQ5, COQ6, COQ7 and COQ9. Interacts with COQ8B and COQ7. It depends on FAD as a cofactor. In terms of tissue distribution, widely expressed.

Its subcellular location is the mitochondrion inner membrane. The protein localises to the golgi apparatus. It localises to the cell projection. It catalyses the reaction 4-hydroxy-3-(all-trans-decaprenyl)benzoate + 2 reduced [2Fe-2S]-[ferredoxin] + O2 + 2 H(+) = 3,4-dihydroxy-5-(all-trans-decaprenyl)benzoate + 2 oxidized [2Fe-2S]-[ferredoxin] + H2O. The enzyme catalyses 2-methoxy-6-(all-trans-decaprenyl)phenol + 2 reduced [2Fe-2S]-[ferredoxin] + O2 + 2 H(+) = 2-methoxy-6-(all-trans-decaprenyl)benzene-1,4-diol + 2 oxidized [2Fe-2S]-[ferredoxin] + H2O. Its pathway is cofactor biosynthesis; ubiquinone biosynthesis. Its function is as follows. FAD-dependent monooxygenase required for two non-consecutive steps during ubiquinone biosynthesis. Required for the C5-ring hydroxylation during ubiquinone biosynthesis by catalyzing the hydroxylation of 4-hydroxy-3-(all-trans-decaprenyl)benzoic acid to 3,4-dihydroxy-5-(all-trans-decaprenyl)benzoic acid. Also acts downstream of COQ4, for the C1-hydroxylation during ubiquinone biosynthesis by catalyzing the hydroxylation of 2-methoxy-6-(all-trans-decaprenyl)phenol to 2-methoxy-6-(all-trans-decaprenyl)benzene-1,4-diol. The electrons required for the hydroxylation reaction are funneled indirectly to COQ6 from NADPH via a ferredoxin/ferredoxin reductase system composed of FDX2 and FDXR. The sequence is that of Ubiquinone biosynthesis monooxygenase COQ6, mitochondrial from Homo sapiens (Human).